A 138-amino-acid polypeptide reads, in one-letter code: Regulator of ribonuclease activity B (138 aa).

Residues 114-138 form a disordered region; it reads YFEDPNGEDGDDEDFVDEDDDGVRH. A compositionally biased stretch (acidic residues) spans 118–138; sequence PNGEDGDDEDFVDEDDDGVRH.

This sequence belongs to the RraB family. Interacts with the C-terminal region of Rne.

The protein resides in the cytoplasm. In terms of biological role, globally modulates RNA abundance by binding to RNase E (Rne) and regulating its endonucleolytic activity. Can modulate Rne action in a substrate-dependent manner by altering the composition of the degradosome. The protein is Regulator of ribonuclease activity B of Escherichia coli (strain K12).